The primary structure comprises 517 residues: Cytochrome P450 monooxygenase TRI4 (517 aa).

A helical transmembrane segment spans residues 15 to 37 (AVGAAVAVGALYFFCQCFYNLYL). The N-linked (GlcNAc...) asparagine glycan is linked to asparagine 444. Cysteine 452 contacts heme.

The protein belongs to the cytochrome P450 family. It depends on heme as a cofactor.

The protein localises to the membrane. Its pathway is sesquiterpene biosynthesis; trichothecene biosynthesis. Functionally, cytochrome P450 monooxygenase; part of the gene cluster that mediates the production of the antimicrobial trichothecene harzianum A (HA) that plays a role in Botrytis cinerea antagonistic activity and plant defense priming. The biosynthesis of harzianum A begins with the cyclization of farnesyl diphosphate to trichodiene and is catalyzed by the trichodiene synthase TRI5. Trichodiene undergoes a series of oxygenations catalyzed by the cytochrome P450 monooxygenase TRI4. TRI4 controls the addition of 3 oxygens at C-2, C-11, and the C-12, C-13-epoxide to form the intermediate isotrichodiol. Isotrichodiol then undergoes a non-enzymatic isomerization and cyclization to form 12,13-epoxytrichothec-9-ene (EPT) which is further converted to trichodermol by the cytochrome P450 monooxygenase TRI11 via C-4 hydroxylation. The last step of HA synthesis is esterification of an octatriendioyl moiety to the C-4 oxygen of trichodermol. The octatriendioyl moiety is probably produced by the polyketide synthase TRI17 and the esterification performed by the trichothecene O-acetyltransferase TRI3. This is Cytochrome P450 monooxygenase TRI4 from Trichoderma arundinaceum.